The primary structure comprises 669 residues: DNA ligase (669 aa).

NAD(+)-binding positions include 34–38 (DAEYD), 83–84 (SL), and glutamate 114. Catalysis depends on lysine 116, which acts as the N6-AMP-lysine intermediate. The NAD(+) site is built by arginine 137, glutamate 171, lysine 287, and lysine 311. Positions 405, 408, 423, and 428 each coordinate Zn(2+). The BRCT domain occupies 591 to 669 (NVESYFAGKT…EERFLQELNK (79 aa)).

The protein belongs to the NAD-dependent DNA ligase family. LigA subfamily. The cofactor is Mg(2+). Mn(2+) is required as a cofactor.

It carries out the reaction NAD(+) + (deoxyribonucleotide)n-3'-hydroxyl + 5'-phospho-(deoxyribonucleotide)m = (deoxyribonucleotide)n+m + AMP + beta-nicotinamide D-nucleotide.. Functionally, DNA ligase that catalyzes the formation of phosphodiester linkages between 5'-phosphoryl and 3'-hydroxyl groups in double-stranded DNA using NAD as a coenzyme and as the energy source for the reaction. It is essential for DNA replication and repair of damaged DNA. The polypeptide is DNA ligase (Bacillus cereus (strain AH820)).